The primary structure comprises 509 residues: Carboxysome shell carbonic anhydrase (509 aa).

A Zn(2+)-binding site is contributed by Cys170. The active-site Proton acceptor is Asp172. His238 and Cys249 together coordinate Zn(2+).

Belongs to the beta-class carbonic anhydrase family. CsoSCA subfamily. As to quaternary structure, homodimer. It depends on Zn(2+) as a cofactor.

It is found in the carboxysome. It carries out the reaction hydrogencarbonate + H(+) = CO2 + H2O. Reversible hydration of carbon dioxide. Essential for photosynthetic carbon dioxide fixation, supplies CO(2) to RuBisCO (ribulose bisphosphate carboxylase, cbbL-cbbS) in the carboxysome. There are estimated to be 29 CsoSCA oligomers per carboxysome. This chain is Carboxysome shell carbonic anhydrase, found in Prochlorococcus marinus subsp. pastoris (strain CCMP1986 / NIES-2087 / MED4).